Reading from the N-terminus, the 385-residue chain is Acetylornithine deacetylase (385 aa).

His-80 contacts Zn(2+). Residue Asp-82 is part of the active site. Residue Asp-112 participates in Zn(2+) binding. The Proton acceptor role is filled by Glu-144. Zn(2+) contacts are provided by Glu-145, Glu-169, and His-355.

The protein belongs to the peptidase M20A family. ArgE subfamily. In terms of assembly, homodimer. Zn(2+) is required as a cofactor. Co(2+) serves as cofactor. It depends on glutathione as a cofactor.

Its subcellular location is the cytoplasm. The catalysed reaction is N(2)-acetyl-L-ornithine + H2O = L-ornithine + acetate. Its pathway is amino-acid biosynthesis; L-arginine biosynthesis; L-ornithine from N(2)-acetyl-L-ornithine (linear): step 1/1. In terms of biological role, catalyzes the hydrolysis of the amide bond of N(2)-acetylated L-amino acids. Cleaves the acetyl group from N-acetyl-L-ornithine to form L-ornithine, an intermediate in L-arginine biosynthesis pathway, and a branchpoint in the synthesis of polyamines. In Photorhabdus laumondii subsp. laumondii (strain DSM 15139 / CIP 105565 / TT01) (Photorhabdus luminescens subsp. laumondii), this protein is Acetylornithine deacetylase.